A 99-amino-acid chain; its full sequence is METLSFEFPAGQPPKGRALVGCVGSGDLEVLLEPGTPGTLTIQVQTSVNGAEQRWQHLFERIFQEQTPPALNIDIHDFGATPGVVRLRLEQGFEEIGHD.

Serine 25 bears the O-(phosphoribosyl dephospho-coenzyme A)serine mark.

This sequence belongs to the MdcC family. Post-translationally, covalently binds the prosthetic group of malonate decarboxylase.

The protein localises to the cytoplasm. Its function is as follows. Subunit of malonate decarboxylase, it is an acyl carrier protein to which acetyl and malonyl thioester residues are bound via a 2'-(5''-phosphoribosyl)-3'-dephospho-CoA prosthetic group and turn over during the catalytic mechanism. This is Malonate decarboxylase acyl carrier protein from Pseudomonas fluorescens (strain SBW25).